The following is a 169-amino-acid chain: 16S rRNA aminocarboxypropyltransferase (169 aa).

S-adenosyl-L-methionine contacts are provided by threonine 17, leucine 67, leucine 90, and threonine 109.

It belongs to the TDD superfamily. TSR3 family.

It localises to the cytoplasm. It catalyses the reaction an N(1)-methylpseudouridine in rRNA + S-adenosyl-L-methionine = N(1)-methyl-N(3)-[(3S)-3-amino-3-carboxypropyl]pseudouridine in rRNA + S-methyl-5'-thioadenosine + H(+). In terms of biological role, aminocarboxypropyltransferase that catalyzes the aminocarboxypropyl transfer on pseudouridine corresponding to position 914 in M.jannaschii 16S rRNA. It constitutes the last step in biosynthesis of the hypermodified N1-methyl-N3-(3-amino-3-carboxypropyl) pseudouridine (m1acp3-Psi). This is 16S rRNA aminocarboxypropyltransferase from Methanothermobacter thermautotrophicus (strain ATCC 29096 / DSM 1053 / JCM 10044 / NBRC 100330 / Delta H) (Methanobacterium thermoautotrophicum).